Consider the following 280-residue polypeptide: tRNA dimethylallyltransferase (280 aa).

9-16 (GPTGSGKT) contributes to the ATP binding site. Position 11–16 (11–16 (TGSGKT)) interacts with substrate. The segment at 34–37 (DSVS) is interaction with substrate tRNA.

The protein belongs to the IPP transferase family. Monomer. It depends on Mg(2+) as a cofactor.

The enzyme catalyses adenosine(37) in tRNA + dimethylallyl diphosphate = N(6)-dimethylallyladenosine(37) in tRNA + diphosphate. Functionally, catalyzes the transfer of a dimethylallyl group onto the adenine at position 37 in tRNAs that read codons beginning with uridine, leading to the formation of N6-(dimethylallyl)adenosine (i(6)A). The sequence is that of tRNA dimethylallyltransferase from Acholeplasma laidlawii (strain PG-8A).